The following is a 110-amino-acid chain: Large ribosomal subunit protein eL30 (110 aa).

This sequence belongs to the eukaryotic ribosomal protein eL30 family.

In Methanocaldococcus jannaschii (strain ATCC 43067 / DSM 2661 / JAL-1 / JCM 10045 / NBRC 100440) (Methanococcus jannaschii), this protein is Large ribosomal subunit protein eL30 (rpl30e).